Reading from the N-terminus, the 157-residue chain is MDVVMKLNNIFSGLPKKKKSKVLGRGIGCGKGKTSGRGHKGQKARSGVSINGFEGGQQSIFTRLPKRGFNSLPKNKYSIINLSLIQRLIDSGKIDNVSAITKEVLYNLGVISSVKQKIKILGDGKLNTTVCIEYDFISKSAKSQVTLLNSLSDSESK.

Belongs to the universal ribosomal protein uL15 family. As to quaternary structure, part of the 50S ribosomal subunit.

Functionally, binds to the 23S rRNA. In Ehrlichia ruminantium (strain Welgevonden), this protein is Large ribosomal subunit protein uL15.